A 213-amino-acid polypeptide reads, in one-letter code: UPF0502 protein Daro_2469 (213 aa).

The protein belongs to the UPF0502 family.

The chain is UPF0502 protein Daro_2469 from Dechloromonas aromatica (strain RCB).